The following is a 243-amino-acid chain: Precursor of CEP9 (243 aa).

The N-terminal stretch at 1–26 (MKLLSITLTSIVISMVFYQTPITTEA) is a signal peptide. Positions 28–44 (SLRKTNDQDHFKAGFTD) are excised as a propeptide. 3 disordered regions span residues 42 to 63 (FTDD…KKGN), 91 to 173 (KTGS…VKGF), and 189 to 243 (NGQD…EPKA). Pro-48 carries the hydroxyproline; partial modification. Hydroxyproline is present on Pro-51. Pro-55 carries the hydroxyproline; partial modification. A propeptide spanning residues 60–96 (KKGNVNVEGFQDDFKPTEGRKLLKTNVQDHFKTGSTD) is cleaved from the precursor. Pro-100, Pro-103, and Pro-107 each carry hydroxyproline. The propeptide occupies 112–148 (KKGNVNVESSEDDFKHKEGRKLQQTNGQNHFKTGSTD). Polar residues predominate over residues 133 to 147 (LQQTNGQNHFKTGST). Residues Pro-152, Pro-155, and Pro-159 each carry the hydroxyproline modification. A propeptide spanning residues 164-200 (KKGHANVKGFKDDFAPTEEIRLQKMNGQDHFKTGSTD) is cleaved from the precursor. A hydroxyproline mark is found at Pro-204, Pro-207, and Pro-211. Residues 216–219 (KKGD) constitute a propeptide that is removed on maturation. Hydroxyproline occurs at positions 223, 226, and 230. Positions 235-243 (AVKNDEPKA) are excised as a propeptide.

The protein belongs to the C-terminally encoded plant signaling peptide (CEP) family. In terms of assembly, interacts with CEP receptors (e.g. CEPR1 and CEPR2). Hydroxylated peptide is more active than non-hydroxylated peptide. In terms of processing, the mature small signaling peptide is generated by proteolytic processing of the longer precursor. In terms of tissue distribution, expressed in lateral root primordia and in lateral roots excluding the meristem region. Also present in the aerial tissues, such as leaf petioles and the shoot apex region.

It localises to the secreted. Its subcellular location is the extracellular space. The protein localises to the apoplast. In terms of biological role, extracellular signaling peptide that represses primary root growth rate and significantly inhibits lateral root formation. Modulates leaf morphology. Regulates systemic nitrogen (N)-demand signaling. Mediates up-regulation of genes involved in N uptake and assimilation pathways. The protein is Precursor of CEP9 of Arabidopsis thaliana (Mouse-ear cress).